A 319-amino-acid chain; its full sequence is Phospho-N-acetylmuramoyl-pentapeptide-transferase (319 aa).

The next 10 membrane-spanning stretches (helical) occupy residues 5-25, 51-71, 79-99, 116-136, 149-169, 172-192, 197-217, 224-244, 252-272, and 299-319; these read LIPF…FIGF, TMGG…VLIW, AWIL…DDGI, LGQI…HFAF, SFLF…AVNL, GLDG…AWIA, NWVI…FFIF, IFMG…VSIF, LLIG…VISF, and VDIV…IIWG.

Belongs to the glycosyltransferase 4 family. MraY subfamily. It depends on Mg(2+) as a cofactor.

Its subcellular location is the cell membrane. It catalyses the reaction UDP-N-acetyl-alpha-D-muramoyl-L-alanyl-gamma-D-glutamyl-L-lysyl-D-alanyl-D-alanine + di-trans,octa-cis-undecaprenyl phosphate = Mur2Ac(oyl-L-Ala-gamma-D-Glu-L-Lys-D-Ala-D-Ala)-di-trans,octa-cis-undecaprenyl diphosphate + UMP. The protein operates within cell wall biogenesis; peptidoglycan biosynthesis. Its function is as follows. Catalyzes the initial step of the lipid cycle reactions in the biosynthesis of the cell wall peptidoglycan: transfers peptidoglycan precursor phospho-MurNAc-pentapeptide from UDP-MurNAc-pentapeptide onto the lipid carrier undecaprenyl phosphate, yielding undecaprenyl-pyrophosphoryl-MurNAc-pentapeptide, known as lipid I. In Lactobacillus johnsonii (strain CNCM I-12250 / La1 / NCC 533), this protein is Phospho-N-acetylmuramoyl-pentapeptide-transferase.